Consider the following 339-residue polypeptide: Putative ABC transporter ATP-binding protein MG467 homolog (339 aa).

The segment at Lys41–Leu87 is disordered. Residues Lys42 to Lys53 show a composition bias toward basic residues. A compositionally biased stretch (basic and acidic residues) spans Val54 to Lys68. Positions Lys74–Lys83 are enriched in basic residues. The region spanning Ile112–Leu338 is the ABC transporter domain. Gly150–Thr157 provides a ligand contact to ATP.

The protein belongs to the ABC transporter superfamily.

The protein is Putative ABC transporter ATP-binding protein MG467 homolog of Mycoplasma pneumoniae (strain ATCC 29342 / M129 / Subtype 1) (Mycoplasmoides pneumoniae).